Consider the following 246-residue polypeptide: Probable transcriptional regulatory protein Teth39_1009 (246 aa).

The interval 1 to 21 (MSGHSKWANIKHKKEKMDAKK) is disordered.

The protein belongs to the TACO1 family.

It is found in the cytoplasm. This Thermoanaerobacter pseudethanolicus (strain ATCC 33223 / 39E) (Clostridium thermohydrosulfuricum) protein is Probable transcriptional regulatory protein Teth39_1009.